A 245-amino-acid polypeptide reads, in one-letter code: ATP synthase subunit a, chloroplastic (245 aa).

5 helical membrane passes run 34 to 54 (TLMTSWFVISLIMIIAFLSNL), 93 to 113 (VPFLGAVFLFIFVSNWGGALL), 132 to 152 (INTTVALALLTSFSYFYAGIS), 197 to 217 (LVIAVLVSLVPLFVPVPLMLL), and 218 to 238 (GLFTSAIQALVFSTLAGAYIG).

The protein belongs to the ATPase A chain family. F-type ATPases have 2 components, CF(1) - the catalytic core - and CF(0) - the membrane proton channel. CF(1) has five subunits: alpha(3), beta(3), gamma(1), delta(1), epsilon(1). CF(0) has four main subunits: a, b, b' and c.

It localises to the plastid. It is found in the chloroplast thylakoid membrane. Its function is as follows. Key component of the proton channel; it plays a direct role in the translocation of protons across the membrane. The polypeptide is ATP synthase subunit a, chloroplastic (Bigelowiella natans (Pedinomonas minutissima)).